The sequence spans 255 residues: Small ribosomal subunit protein uS2 (255 aa).

The protein belongs to the universal ribosomal protein uS2 family.

The protein is Small ribosomal subunit protein uS2 of Streptococcus pyogenes serotype M28 (strain MGAS6180).